The following is a 602-amino-acid chain: MKTKAPMKNIRNFSIIAHIDHGKSTLADCLISECNAISNREMKSQVMDTMDIEKERGITIKAQSVRLNYTFKGEDYVLNLIDTPGHVDFSYEVSRSLCSCEGALLVVDATQGVEAQTIANVYIALDNNLEILPVINKIDLPNANVLEVKQDIEDTIGIDCFSANEVSAKAKLGIKDLLEKIITTIPAPSGDFNAPLKALIYDSWFDNYLGALALVRIMDGSINTEQEILVMGTGKKHGVLGLYYPNPLKKIPTKSLECGEIGIVSLGLKSVTDIAVGDTLTDAKNPTPKPIEGFMPAKPFVFAGLYPIETDRFEDLREALLKLQLNDCALNFEPESSVALGFGFRVGFLGLLHMEVIKERLEREFSLNLIATAPTVVYEVHLTDNSVKYVQNPSELPPENHIACIKEPFVRATIITPSEFLGNLMQLLNNKRGIQEKMEYLNQSRVMLTYSLPSNEIVMDFYDKLKSCTKGYASFDYEPIENREAHLVKLDVRVAGDVVDALSIIIDKNKAYEKGRALVETMKELIPRQLFEVAIQASVGNKIIARETIKSVGKNVTAKCYGGDITRKRKLLEKQKEGKKRMKAIGKVELPQEAFLAILKID.

Positions Lys8–Ser189 constitute a tr-type G domain. Residues Asp20 to Thr25 and Asn136 to Asp139 each bind GTP.

It belongs to the TRAFAC class translation factor GTPase superfamily. Classic translation factor GTPase family. LepA subfamily.

It localises to the cell inner membrane. The enzyme catalyses GTP + H2O = GDP + phosphate + H(+). Required for accurate and efficient protein synthesis under certain stress conditions. May act as a fidelity factor of the translation reaction, by catalyzing a one-codon backward translocation of tRNAs on improperly translocated ribosomes. Back-translocation proceeds from a post-translocation (POST) complex to a pre-translocation (PRE) complex, thus giving elongation factor G a second chance to translocate the tRNAs correctly. Binds to ribosomes in a GTP-dependent manner. The polypeptide is Elongation factor 4 (Helicobacter pylori (strain G27)).